The sequence spans 633 residues: DNA-directed RNA polymerase subunit gamma (633 aa).

C74, C76, C89, and C92 together coordinate Zn(2+). The Mg(2+) site is built by D471, D473, and D475.

Belongs to the RNA polymerase beta' chain family. RpoC1 subfamily. In cyanobacteria the RNAP catalytic core is composed of 2 alpha, 1 beta, 1 beta', 1 gamma and 1 omega subunit. When a sigma factor is associated with the core the holoenzyme is formed, which can initiate transcription. The cofactor is Mg(2+). Zn(2+) is required as a cofactor.

It catalyses the reaction RNA(n) + a ribonucleoside 5'-triphosphate = RNA(n+1) + diphosphate. DNA-dependent RNA polymerase catalyzes the transcription of DNA into RNA using the four ribonucleoside triphosphates as substrates. The chain is DNA-directed RNA polymerase subunit gamma from Prochlorococcus marinus (strain MIT 9211).